A 780-amino-acid polypeptide reads, in one-letter code: Cullin-5 (780 aa).

The residue at position 34 (Ser-34) is a Phosphoserine. Position 210 is a phosphothreonine (Thr-210). The Cullin neddylation domain occupies Arg-711 to Asp-772. Residue Lys-724 forms a Glycyl lysine isopeptide (Lys-Gly) (interchain with G-Cter in NEDD8) linkage.

The protein belongs to the cullin family. As to quaternary structure, component of multiple cullin-5-RING E3 ubiquitin-protein ligase complexes (ECS complexes, also named CRL5 complexes) formed of CUL5, Elongin BC (ELOB and ELOC), RNF7/RBX2 and a variable SOCS box domain-containing protein as substrate-specific recognition component. CUL5-containing ECS complexes specifically contain RNF7/RBX2, and not RBX1, as catalytic subunit. Component of the ECS(ASB2) complex with the substrate recognition component ASB2. Component of the ECS(ASB6) complex with the substrate recognition component ASB6. Component of the ECS(ASB7) complex with the substrate recognition component ASB7. Component of the ECS(ASB9) complex with the substrate recognition component ASB9. Component of the ECS(ASB11) complex with the substrate recognition component ASB11. Component of the ECS(ASB12) complex with the substrate recognition component ASB12. Component of the ECS(LRRC41) complex with the substrate recognition component LRRC41. Component of the ECS(SOCS1) complex with the substrate recognition component SOCS1. Component of the ECS(SOCS2) complex with the substrate recognition component SOCS2. Component of the ECS(WSB1) complex with the substrate recognition subunit WSB1. Component of the ECS(SOCS3) complex with the substrate recognition component SOCS3. Component of the ECS(SOCS7) complex with the substrate recognition component SOCS7. Component of the ECS(SPSB1) complex with the substrate recognition component SPSB1. Component of the ECS(SPSB3) complex with the substrate recognition component SPSB3. Component of the ECS(SPSB2) complex with the substrate recognition component SPSB2. Component of the ECS(SPSB4) complex with the substrate recognition component SPSB4. Component of the ECS(RAB40) complex with the substrate recognition subunit RAB40A, RAB40B or RAB40C. Component of the ECS(KLHDC1) complex with the substrate recognition component KLHDC1. Component of the ECS(PCMTD1) complex with the substrate recognition subunit PCMTD1. May also form complexes containing RBX1 and ELOA or VHL; additional evidence is however required to confirm this result in vivo. Interacts (when neddylated) with ARIH2; leading to activate the E3 ligase activity of ARIH2. Interacts with ERCC6; the interaction is induced by DNA damaging agents or inhibitors of RNA polymerase II elongation. Interacts with ELOA (via the BC-box). Interacts (unneddylated form) with DCUN1D1, DCUN1D2, DCUN1D3, DCUN1D4 and DCUN1D5; these interactions promote the cullin neddylation. (Microbial infection) Interacts (via the substrate recognition component) with HIV-1 Vif; forming an active cullin-5-RING E3 ubiquitin-protein ligase complex (ECS complex). In terms of assembly, (Microbial infection) Interacts (via the substrate recognition component) with human adenovirus 5 proteins E1B-55K and E4-orf6. As to quaternary structure, (Microbial infection) Interacts with herpes virus 8 protein LANA1; this interaction promotes the degradation of NF-kappa-B component RELA. (Microbial infection) Interacts with molluscum contagiosum virus protein MC132; this interaction promotes the degradation of NF-kappa-B component RELA. Post-translationally, neddylated; which enhances the ubiquitination activity of ECS complexes and prevents binding of the inhibitor CAND1. Deneddylated via its interaction with the COP9 signalosome (CSN).

Its subcellular location is the nucleus. The protein operates within protein modification; protein ubiquitination. Core component of multiple cullin-5-RING E3 ubiquitin-protein ligase complexes (ECS complexes, also named CRL5 complexes), which mediate the ubiquitination and subsequent proteasomal degradation of target proteins. Acts a scaffold protein that contributes to catalysis through positioning of the substrate and the ubiquitin-conjugating enzyme. The functional specificity of the E3 ubiquitin-protein ligase complex depends on the variable SOCS box-containing substrate recognition component. Acts as a key regulator of neuron positioning during cortex development: component of various SOCS-containing ECS complexes, such as the ECS(SOCS7) complex, that regulate reelin signaling by mediating ubiquitination and degradation of DAB1. ECS(SOCS1) seems to direct ubiquitination of JAK2. The ECS(SOCS2) complex mediates the ubiquitination and subsequent proteasomal degradation of phosphorylated EPOR and GHR. The ECS(SPSB3) complex catalyzes ubiquitination of nuclear CGAS. ECS(KLHDC1) complex is part of the DesCEND (destruction via C-end degrons) pathway and mediates ubiquitination and degradation of truncated SELENOS selenoprotein produced by failed UGA/Sec decoding, which ends with a glycine. The ECS(ASB9) complex mediates ubiquitination and degradation of CKB. As part of some ECS complex, promotes 'Lys-11'-linked ubiquitination and degradation of BTRC. As part of a multisubunit ECS complex, polyubiquitinates monoubiquitinated POLR2A. As part of the ECS(RAB40C) complex, mediates ANKRD28 ubiquitination and degradation, thereby inhibiting protein phosphatase 6 (PP6) complex activity and focal adhesion assembly during cell migration. As part of the ECS(RAB40A) complex, mediates RHOU 'Lys-48'-linked ubiquitination and degradation, thus inhibiting focal adhesion disassembly during cell migration. As part of the ECS(RAB40B) complex, mediates LIMA1/EPLIN and RAP2 ubiquitination, thereby regulating actin cytoskeleton dynamics and stress fiber formation during cell migration. May form a cell surface vasopressin receptor. In terms of biological role, (Microbial infection) Following infection by HIV-1 virus, CUL5 associates with HIV-1 Vif proteins and forms a cullin-5-RING E3 ubiquitin-protein ligase complex (ECS complex) that catalyzes ubiquitination and degradation of APOBEC3F and APOBEC3G. The complex can also ubiquitinate APOBEC3H to some extent. Functionally, (Microbial infection) Seems to be involved in proteasomal degradation of p53/TP53 stimulated by adenovirus E1B-55 kDa protein. In Homo sapiens (Human), this protein is Cullin-5.